The primary structure comprises 586 residues: A-type ATP synthase subunit A (586 aa).

Position 232-239 (232-239) interacts with ATP; sequence GPFGSGKT.

Belongs to the ATPase alpha/beta chains family. As to quaternary structure, has multiple subunits with at least A(3), B(3), C, D, E, F, H, I and proteolipid K(x).

Its subcellular location is the cell membrane. It catalyses the reaction ATP + H2O + 4 H(+)(in) = ADP + phosphate + 5 H(+)(out). Its function is as follows. Component of the A-type ATP synthase that produces ATP from ADP in the presence of a proton gradient across the membrane. The A chain is the catalytic subunit. The polypeptide is A-type ATP synthase subunit A (Methanococcus vannielii (strain ATCC 35089 / DSM 1224 / JCM 13029 / OCM 148 / SB)).